We begin with the raw amino-acid sequence, 192 residues long: Putative inactive ribonuclease 11 (192 aa).

An N-terminal signal peptide occupies residues 1-15; the sequence is MAVFLLLLALGLLLA. A disordered region spans residues 21 to 54; it reads RMKGTTEQFSQEEMQPAAKQTLEESANSTLSDKN. The segment covering 43 to 54 has biased composition (polar residues); that stretch reads EESANSTLSDKN. N-linked (GlcNAc...) asparagine glycosylation is found at Asn-47 and Asn-104.

Belongs to the pancreatic ribonuclease family.

It is found in the secreted. This is Putative inactive ribonuclease 11 (Rnase11) from Mus musculus (Mouse).